The sequence spans 125 residues: MPTINQLVRKPRQMDVVKSKVPALEACPQKRGVCTRVYTTTPKKPNSALRKVAKVRLTNGFEVISYIGGEGHNLQEHSVVLIRGGRVKDLPGVRYHIVRGSLDLQGVKDRKQSRSKYGAKRPKKA.

Asp89 is subject to 3-methylthioaspartic acid. A disordered region spans residues 106–125 (GVKDRKQSRSKYGAKRPKKA). The span at 113–125 (SRSKYGAKRPKKA) shows a compositional bias: basic residues.

It belongs to the universal ribosomal protein uS12 family. Part of the 30S ribosomal subunit. Contacts proteins S8 and S17. May interact with IF1 in the 30S initiation complex.

With S4 and S5 plays an important role in translational accuracy. Its function is as follows. Interacts with and stabilizes bases of the 16S rRNA that are involved in tRNA selection in the A site and with the mRNA backbone. Located at the interface of the 30S and 50S subunits, it traverses the body of the 30S subunit contacting proteins on the other side and probably holding the rRNA structure together. The combined cluster of proteins S8, S12 and S17 appears to hold together the shoulder and platform of the 30S subunit. This is Small ribosomal subunit protein uS12 from Azoarcus sp. (strain BH72).